The chain runs to 299 residues: Pantothenate synthetase (299 aa).

41 to 48 (MGALHEGH) lines the ATP pocket. Catalysis depends on H48, which acts as the Proton donor. Q72 contributes to the (R)-pantoate binding site. Q72 provides a ligand contact to beta-alanine. Residue 158–161 (GQKD) participates in ATP binding. Q164 lines the (R)-pantoate pocket. ATP is bound by residues V187 and 195-198 (MSSR).

It belongs to the pantothenate synthetase family. In terms of assembly, homodimer.

Its subcellular location is the cytoplasm. The enzyme catalyses (R)-pantoate + beta-alanine + ATP = (R)-pantothenate + AMP + diphosphate + H(+). It participates in cofactor biosynthesis; (R)-pantothenate biosynthesis; (R)-pantothenate from (R)-pantoate and beta-alanine: step 1/1. Its function is as follows. Catalyzes the condensation of pantoate with beta-alanine in an ATP-dependent reaction via a pantoyl-adenylate intermediate. This Acidobacterium capsulatum (strain ATCC 51196 / DSM 11244 / BCRC 80197 / JCM 7670 / NBRC 15755 / NCIMB 13165 / 161) protein is Pantothenate synthetase.